Reading from the N-terminus, the 204-residue chain is Protein Mis18-alpha (204 aa).

Phosphoserine occurs at positions 13, 16, and 17. The Mis18 domain maps to 51–149 (PLVFLCARCR…SVEAVESYTL (99 aa)). Cys56, Cys59, Cys112, and Cys115 together coordinate Zn(2+). Residue Lys133 forms a Glycyl lysine isopeptide (Lys-Gly) (interchain with G-Cter in SUMO2) linkage. Position 204 is a phosphoserine (Ser204).

It belongs to the mis18 family. In terms of assembly, homodimer, and heterodimer with OIP5/MIS18B. Identified in a complex containing MIS18A, OIP5/MIS18B, MIS18BP1, RBBP7 and RBBP4.

It localises to the nucleus. The protein resides in the chromosome. It is found in the centromere. Its function is as follows. Required for recruitment of CENPA to centromeres and normal chromosome segregation during mitosis. This chain is Protein Mis18-alpha (Mis18a), found in Mus musculus (Mouse).